The chain runs to 113 residues: UPF0482 protein YnfB (113 aa).

Positions 1–28 (MKITLSKRIGLLAFLLPCALALSTTVHA) are cleaved as a signal peptide.

The protein belongs to the UPF0482 family.

This chain is UPF0482 protein YnfB, found in Shigella dysenteriae serotype 1 (strain Sd197).